A 270-amino-acid polypeptide reads, in one-letter code: Putative pyruvate, phosphate dikinase regulatory protein (270 aa).

148–155 (GVSRTSKT) provides a ligand contact to ADP.

Belongs to the pyruvate, phosphate/water dikinase regulatory protein family. PDRP subfamily.

It catalyses the reaction N(tele)-phospho-L-histidyl/L-threonyl-[pyruvate, phosphate dikinase] + ADP = N(tele)-phospho-L-histidyl/O-phospho-L-threonyl-[pyruvate, phosphate dikinase] + AMP + H(+). The enzyme catalyses N(tele)-phospho-L-histidyl/O-phospho-L-threonyl-[pyruvate, phosphate dikinase] + phosphate + H(+) = N(tele)-phospho-L-histidyl/L-threonyl-[pyruvate, phosphate dikinase] + diphosphate. Bifunctional serine/threonine kinase and phosphorylase involved in the regulation of the pyruvate, phosphate dikinase (PPDK) by catalyzing its phosphorylation/dephosphorylation. This chain is Putative pyruvate, phosphate dikinase regulatory protein, found in Bacillus cereus (strain B4264).